We begin with the raw amino-acid sequence, 688 residues long: DNA ligase (688 aa).

NAD(+) contacts are provided by residues 38-42 (DEEYD), 87-88 (SL), and glutamate 118. Lysine 120 serves as the catalytic N6-AMP-lysine intermediate. Arginine 141, glutamate 175, lysine 291, and lysine 315 together coordinate NAD(+). Zn(2+) is bound by residues cysteine 409, cysteine 412, cysteine 428, and cysteine 433. The BRCT domain occupies 590–679 (MKLDILKGLT…AELKGYNFDE (90 aa)).

The protein belongs to the NAD-dependent DNA ligase family. LigA subfamily. It depends on Mg(2+) as a cofactor. Mn(2+) is required as a cofactor.

The enzyme catalyses NAD(+) + (deoxyribonucleotide)n-3'-hydroxyl + 5'-phospho-(deoxyribonucleotide)m = (deoxyribonucleotide)n+m + AMP + beta-nicotinamide D-nucleotide.. In terms of biological role, DNA ligase that catalyzes the formation of phosphodiester linkages between 5'-phosphoryl and 3'-hydroxyl groups in double-stranded DNA using NAD as a coenzyme and as the energy source for the reaction. It is essential for DNA replication and repair of damaged DNA. The sequence is that of DNA ligase from Thermotoga petrophila (strain ATCC BAA-488 / DSM 13995 / JCM 10881 / RKU-1).